The following is a 436-amino-acid chain: D-amino acid dehydrogenase (436 aa).

3 to 17 (IVVLGAGVVGVTSAY) is a binding site for FAD.

This sequence belongs to the DadA oxidoreductase family. Requires FAD as cofactor.

The catalysed reaction is a D-alpha-amino acid + A + H2O = a 2-oxocarboxylate + AH2 + NH4(+). It functions in the pathway amino-acid degradation; D-alanine degradation; NH(3) and pyruvate from D-alanine: step 1/1. Oxidative deamination of D-amino acids. The protein is D-amino acid dehydrogenase of Cereibacter sphaeroides (strain ATCC 17023 / DSM 158 / JCM 6121 / CCUG 31486 / LMG 2827 / NBRC 12203 / NCIMB 8253 / ATH 2.4.1.) (Rhodobacter sphaeroides).